The primary structure comprises 57 residues: MAVPKKKTSKAKRDQRRAHWRRQASSQAQKALSLGKSILSGRSTFLYPPAEEEGEEE.

The segment covering 1 to 22 has biased composition (basic residues); it reads MAVPKKKTSKAKRDQRRAHWRR. The tract at residues 1–35 is disordered; the sequence is MAVPKKKTSKAKRDQRRAHWRRQASSQAQKALSLG.

It belongs to the bacterial ribosomal protein bL32 family.

In Synechocystis sp. (strain ATCC 27184 / PCC 6803 / Kazusa), this protein is Large ribosomal subunit protein bL32 (rpmF).